Reading from the N-terminus, the 626-residue chain is Membrane protein insertase YidC (626 aa).

The next 5 helical transmembrane spans lie at 8-28, 399-419, 469-489, 527-547, and 563-583; these read LILA…LFPP, MGLA…PLAY, LPIL…FVTL, SIMA…SMWL, and IFAW…SGLL.

The protein belongs to the OXA1/ALB3/YidC family. Type 1 subfamily. Interacts with the Sec translocase complex via SecD. Specifically interacts with transmembrane segments of nascent integral membrane proteins during membrane integration.

It localises to the cell inner membrane. Required for the insertion and/or proper folding and/or complex formation of integral membrane proteins into the membrane. Involved in integration of membrane proteins that insert both dependently and independently of the Sec translocase complex, as well as at least some lipoproteins. Aids folding of multispanning membrane proteins. This chain is Membrane protein insertase YidC, found in Jannaschia sp. (strain CCS1).